Consider the following 105-residue polypeptide: Malonate decarboxylase acyl carrier protein (105 aa).

Serine 28 is subject to O-(phosphoribosyl dephospho-coenzyme A)serine.

The protein belongs to the MdcC family. In terms of processing, covalently binds the prosthetic group of malonate decarboxylase.

Its subcellular location is the cytoplasm. Its function is as follows. Subunit of malonate decarboxylase, it is an acyl carrier protein to which acetyl and malonyl thioester residues are bound via a 2'-(5''-phosphoribosyl)-3'-dephospho-CoA prosthetic group and turn over during the catalytic mechanism. This Xanthomonas euvesicatoria pv. vesicatoria (strain 85-10) (Xanthomonas campestris pv. vesicatoria) protein is Malonate decarboxylase acyl carrier protein.